A 366-amino-acid polypeptide reads, in one-letter code: Carbamoyl phosphate synthase small chain (366 aa).

The CPSase stretch occupies residues 1–171 (MKKRKLILED…KPYVVPGRGL (171 aa)). Residues Ser-46, Gly-220, and Gly-222 each coordinate L-glutamine. A Glutamine amidotransferase type-1 domain is found at 172 to 359 (RVVMVDFGAK…LNLIKASKVK (188 aa)). The active-site Nucleophile is Cys-247. Residues Leu-248, Gln-251, Asn-289, and Tyr-292 each coordinate L-glutamine. Active-site residues include His-332 and Glu-334.

It belongs to the CarA family. Composed of two chains; the small (or glutamine) chain promotes the hydrolysis of glutamine to ammonia, which is used by the large (or ammonia) chain to synthesize carbamoyl phosphate. Tetramer of heterodimers (alpha,beta)4.

It catalyses the reaction hydrogencarbonate + L-glutamine + 2 ATP + H2O = carbamoyl phosphate + L-glutamate + 2 ADP + phosphate + 2 H(+). The catalysed reaction is L-glutamine + H2O = L-glutamate + NH4(+). It participates in amino-acid biosynthesis; L-arginine biosynthesis; carbamoyl phosphate from bicarbonate: step 1/1. It functions in the pathway pyrimidine metabolism; UMP biosynthesis via de novo pathway; (S)-dihydroorotate from bicarbonate: step 1/3. Small subunit of the glutamine-dependent carbamoyl phosphate synthetase (CPSase). CPSase catalyzes the formation of carbamoyl phosphate from the ammonia moiety of glutamine, carbonate, and phosphate donated by ATP, constituting the first step of 2 biosynthetic pathways, one leading to arginine and/or urea and the other to pyrimidine nucleotides. The small subunit (glutamine amidotransferase) binds and cleaves glutamine to supply the large subunit with the substrate ammonia. In Oceanobacillus iheyensis (strain DSM 14371 / CIP 107618 / JCM 11309 / KCTC 3954 / HTE831), this protein is Carbamoyl phosphate synthase small chain.